Here is a 242-residue protein sequence, read N- to C-terminus: MSNVSMRDMLKAGVHFGHKTRYWNPKMKQFIFGARDKVHIINLEQTVPMFNEALAFVNNVSSKKGKVLFVGTKRAASDAIKDAAIKSDQFYVNHRWLGGMLTNWKTVRQSIKRLKDLESQSTDGTFEALTKKEALMRTREMEKLDKSLGGIKNMGGLPDVLFIIDADHEHIAIKEANNLGIPVISVVDTNSNPDGVDYVVPGNDDAIRAVTLYCDAVANSVLSGREQNIVVQAEKDGFVEAE.

This sequence belongs to the universal ribosomal protein uS2 family.

The chain is Small ribosomal subunit protein uS2 from Colwellia psychrerythraea (strain 34H / ATCC BAA-681) (Vibrio psychroerythus).